A 355-amino-acid chain; its full sequence is Peptide chain release factor 1 (355 aa).

The residue at position 231 (Gln231) is an N5-methylglutamine. A compositionally biased stretch (basic and acidic residues) spans 283 to 292 (LAKETSERKS). The segment at 283 to 306 (LAKETSERKSQVGTGDRSGRIRTY) is disordered.

It belongs to the prokaryotic/mitochondrial release factor family. Methylated by PrmC. Methylation increases the termination efficiency of RF1.

It is found in the cytoplasm. Its function is as follows. Peptide chain release factor 1 directs the termination of translation in response to the peptide chain termination codons UAG and UAA. The protein is Peptide chain release factor 1 of Campylobacter concisus (strain 13826).